The sequence spans 60 residues: Large ribosomal subunit protein bL32 (60 aa).

Belongs to the bacterial ribosomal protein bL32 family.

This Latilactobacillus sakei subsp. sakei (strain 23K) (Lactobacillus sakei subsp. sakei) protein is Large ribosomal subunit protein bL32.